The following is a 306-amino-acid chain: 5'-hydroxyaverantin dehydrogenase (306 aa).

NADP(+) contacts are provided by serine 25, isoleucine 27, glutamine 48, lysine 52, and aspartate 73. The active-site Proton donor is serine 173. NADP(+)-binding residues include tyrosine 187, lysine 191, valine 220, and threonine 222. The active-site Proton acceptor is the tyrosine 187. Lysine 191 acts as the Lowers pKa of active site Tyr in catalysis.

The protein belongs to the short-chain dehydrogenases/reductases (SDR) family. Homodimer.

The protein resides in the cytoplasm. It localises to the cytosol. It catalyses the reaction (1'S,5'S)-5'-hydroxyaverantin + NAD(+) = (S)-5'-oxoaverantin + NADH + H(+). The enzyme catalyses (1'S,5'R)-5'-hydroxyaverantin + NAD(+) = (S)-5'-oxoaverantin + NADH + 2 H(+). It functions in the pathway mycotoxin biosynthesis. 5'-hydroxyaverantin dehydrogenase; part of the fragmented gene cluster that mediates the biosynthesis of dothistromin (DOTH), a polyketide toxin very similar in structure to the aflatoxin precursor, versicolorin B. The first step of the pathway is the conversion of acetate to norsolorinic acid (NOR) and requires the fatty acid synthase subunits hexA and hexB, as well as the polyketide synthase pksA. PksA combines a hexanoyl starter unit and 7 malonyl-CoA extender units to synthesize the precursor NOR. The hexanoyl starter unit is provided to the acyl-carrier protein (ACP) domain by the fungal fatty acid synthase hexA/hexB. The second step is the conversion of NOR to averantin (AVN) and requires the norsolorinic acid ketoreductase nor1, which catalyzes the dehydration of norsolorinic acid to form (1'S)-averantin. The cytochrome P450 monooxygenase avnA then catalyzes the hydroxylation of AVN to 5'hydroxyaverantin (HAVN). The next step is performed by adhA that transforms HAVN to averufin (AVF). Averufin might then be converted to hydroxyversicolorone by cypX and avfA. Hydroxyversicolorone is further converted versiconal hemiacetal acetate (VHA) by moxY. VHA is then the substrate for the versiconal hemiacetal acetate esterase est1 to yield versiconal (VAL). Versicolorin B synthase vbsA then converts VAL to versicolorin B (VERB) by closing the bisfuran ring. Then, the activity of the versicolorin B desaturase verB leads to versicolorin A (VERA). DotB, a predicted chloroperoxidase, may perform epoxidation of the A-ring of VERA. Alternatively, a cytochrome P450, such as cypX or avnA could catalyze this step. It is also possible that another, uncharacterized, cytochrome P450 enzyme is responsible for this step. Opening of the epoxide could potentially be achieved by the epoxide hydrolase epoA. However, epoA seems not to be required for DOTH biosynthesis, but other epoxide hydrolases may have the ability to complement this hydrolysis. Alternatively, opening of the epoxide ring could be achieved non-enzymatically. The next step is the deoxygenation of ring A to yield the 5,8-dihydroxyanthraquinone which is most likely catalyzed by the NADPH dehydrogenase encoded by ver1. The last stages of DOTH biosynthesis are proposed to involve hydroxylation of the bisfuran. OrdB and norB might have oxidative roles here. An alternative possibility is that cytochrome P450 monoogenases such as avnA and cypX might perform these steps in addition to previously proposed steps. This is 5'-hydroxyaverantin dehydrogenase from Dothistroma septosporum (strain NZE10 / CBS 128990) (Red band needle blight fungus).